A 1297-amino-acid polypeptide reads, in one-letter code: Protein ENHANCED DOWNY MILDEW 2 (1297 aa).

The segment at 222 to 281 (ESVCAICDNGGEILCCEGSCLRSFHATKKDGEDSLCDSLGFNKMQVEAIQKYFCPNCEHK) adopts a PHD-type 1; degenerate zinc-finger fold. Zn(2+) is bound by residues Cys-237, Cys-241, Cys-275, Cys-278, Cys-285, Cys-288, Cys-306, Cys-311, His-316, Cys-319, Cys-346, and His-349. The PHD-type 2; atypical zinc finger occupies 282 to 352 (IHQCFICKNL…EYTCPLHKCS (71 aa)). The PHD-type 3; degenerate zinc finger occupies 351–417 (CSVCENGEVK…RVLIYCQEHE (67 aa)). Residues 445 to 452 (QRRILESH) carry the Nuclear localization signal 1 motif. 2 disordered regions span residues 471 to 547 (CGKA…ARDA) and 562 to 598 (TQEP…IPTL). Low complexity predominate over residues 475-487 (SKNSFRSSFPSSK). Residues 492 to 499 (TKKHGLVS) carry the Nuclear localization signal 2 motif. The segment covering 526-547 (KMMEDSREAGKNKLGVKEARDA) has biased composition (basic and acidic residues). 2 consecutive short sequence motifs (nuclear localization signal) follow at residues 610 to 617 (MKKATEEI) and 979 to 986 (LKKEGKTK). Composition is skewed to basic and acidic residues over residues 969–990 (QSDH…DYSG) and 1096–1109 (EVSR…RTSR). 3 disordered regions span residues 969 to 1017 (QSDH…GELS), 1085 to 1109 (HGCK…RTSR), and 1260 to 1297 (FPLP…WIND).

Interacts with WNK8 in nucleus; this interaction is involved in developmental processes regulation but not in RPP7-dependent disease resistance. Interacts with EML1 and EML2 in nucleus. Component of the ASI1-AIPP1-EDM2 (AAE) RNA regulatory complex composed of at least AIPP1/EDM3, ASI1 and EDM2 and may contain CPL2, AIPP2 and AIPP3/BDT1. Binds directly to AIPP1/EDM3. Co-associates with AIPP1/EDM3 to histone H3 lysine 9 dimethylation (H3K9me2)-marked chromatin and transcripts at a critical proximal polyadenylation site of RPP7 to hamper proximal transcript polyadeylation/termination. In terms of processing, phosphorylated by WNK8.

The protein localises to the nucleus. Functionally, cellular antisilencing factor and regulator of genome DNA methylation patterns involved in the regulation of chromatin states. Together with SUVH4, monitors repressive epigenetic marks H3K27me1, H3K9me2, and prevents DNA-methylation at CHG sites, affecting especially the expression of transposons and developmentally important genes. Collaboratively with ASI1 and AIPP1/EDM3, the AAE complex regulates alternative RNA processing (e.g. alternative splicing) and epigenetic silencing (e.g. H3K9me2) of intronic heterochromatin-containing genes as well as genic heterochromatin-containing genes by promoting distal 3' polyadenylation. Epigenetic reader that binds DNA and contributes to transcriptional transposable element (TE) silencing by modulating levels of the repressive post-translational histone modifications (PHM) H3K9me2. In cv. Columbia, required for RPP7-dependent disease resistance against the Hyaloperonospora arabidopsidis isolate Hiks1, by promoting levels of RPP7 via alternative polyadenylation (APA), resulting from cooption of epigenetic information at the TE insertion locus COPIA-R7. Exhibits a global role in NLR (nucleotide-binding, leucine-rich repeat) defense genes epigenetic (e.g. H3K9me2 hallmarks) expression control; promotes the accumulation of RPP7, RPP4 and some other proteins, but mediates the repression of several other NLR products, probably to compensate for fitness penalties caused by defense mechanisms. Regulates development processes such as the formation of leaf pavement cells, leaf expansion, fertility and flowering. Prevents FLC accumulation to control flowering. Modulates stomatal development by regulating the methylation-mediated silencing of ERECTA receptor genes (e.g. ER, ERL1 and ERL2) and preventing cell divisions. This Arabidopsis thaliana (Mouse-ear cress) protein is Protein ENHANCED DOWNY MILDEW 2.